Reading from the N-terminus, the 309-residue chain is Taste receptor type 2 member 31 (309 aa).

The Extracellular portion of the chain corresponds to 1-2; the sequence is MT. A helical membrane pass occupies residues 3 to 23; it reads TFIPIIFSSVVVVLFVIGNFA. Residues 24–55 lie on the Cytoplasmic side of the membrane; that stretch reads NGFIALVNSIERVKRQKISFADQILTALAVSR. Residues 56–76 form a helical membrane-spanning segment; sequence VGLLWVLLLNWYSTVFNPAFY. Residues 77–100 are Extracellular-facing; the sequence is SVEVRTTAYNVWAVTGHFSNWLAT. A helical transmembrane segment spans residues 101-121; sequence SLSIFYLLKIANFSNLIFLHL. The Cytoplasmic portion of the chain corresponds to 122–126; that stretch reads KRRVK. Residues 127–147 form a helical membrane-spanning segment; sequence SVILVMLLGPLLFLACQLFVI. Topologically, residues 148–181 are extracellular; it reads NMKEIVRTKEYEGNLTWKIKLRSAVYLSDATVTT. Asn161 carries N-linked (GlcNAc...) asparagine glycosylation. A helical transmembrane segment spans residues 182–202; it reads LGNLVPFTLTLLCFLLLICSL. Topologically, residues 203-229 are cytoplasmic; sequence CKHLKKMQLHGKGSQDPSTKVHIKALQ. Residues 230–250 traverse the membrane as a helical segment; the sequence is TVIFFLLLCAVYFLSIMISVW. The Extracellular portion of the chain corresponds to 251 to 259; sequence SFGSLENKP. Residues 260-280 form a helical membrane-spanning segment; the sequence is VFMFCKAIRFSYPSIHPFILI. Over 281–309 the chain is Cytoplasmic; it reads WGNKKLKQTFLSVLRQVRYWVKGEKPSSP.

The protein belongs to the G-protein coupled receptor T2R family. Expressed in subsets of taste receptor cells of the tongue and exclusively in gustducin-positive cells.

The protein resides in the membrane. Functionally, receptor that may play a role in the perception of bitterness and is gustducin-linked. May play a role in sensing the chemical composition of the gastrointestinal content. The activity of this receptor may stimulate alpha gustducin, mediate PLC-beta-2 activation and lead to the gating of TRPM5. Activated by the sulfonyl amide sweeteners saccharin and acesulfame K. The sequence is that of Taste receptor type 2 member 31 (TAS2R31) from Homo sapiens (Human).